We begin with the raw amino-acid sequence, 652 residues long: MAVDDYEELLKYYELHETIGTGGFAKVKLASHLTTGEKVAIKIMDKESLGDDLPRVKTEIDAMKNLSHQHVCRLYHVIETPNKIFMVLEYCPGGELFDYIIAKDRLTEDEARVFFRQIVSAVAYIHSQGYAHRDLKPENLLIDEDQNLKLIDFGLCAKPKGGLDYHLMTCCGSPAYAAPELIQGKAYIGSEADIWSMGVLMYALMCGYLPFDDDNVMVLYKKIMRGKYEIPKWLSPGSVLLLSQMLQVDPKKRISVKHLLSHPWLMQGYSCPVEWQSKYPLGYVDEDCVTELSVFYKCSRTSTSRLISEWNYDHITASYLLLHSKKSHGKPVRLKRPLAVGDQPVTSFKELRPKSTLDFEEPNCGEIAYVFGSMEFSDDELFSEDFAYSCFEPHTPKEYVKGRSEFHSVDSAPSTPVVQRYARHKSEDKENCDAALGKDENVFLHPAPWTPTPRRKQNEKKGILTTPNKNSHTKEKNQSKETPTKKPITTGEELANVISPERRCRSVELDLNQAHVDSAQKKKGAKVFGSLERGLDKMITMLTPSKRKGYAREGPRKLRAHYNVTTTNIMNPEQLLNQIVKVLPSKNVDYVQKGYTLKCKTQSDFGKVTMQFELEVCQLSKSEMVGIRRQRLKGDAWVYKRLVEDILSSCKV.

The region spanning 13-265 (YELHETIGTG…VKHLLSHPWL (253 aa)) is the Protein kinase domain. Residues 19–27 (IGTGGFAKV) and lysine 42 each bind ATP. The active-site Proton acceptor is the aspartate 134. Threonine 169 carries the post-translational modification Phosphothreonine; by autocatalysis. Serine 173 is modified (phosphoserine; by autocatalysis). A UBA-like region spans residues 284–323 (VDEDCVTELSVFYKCSRTSTSRLISEWNYDHITASYLLLH). The segment at 328–652 (HGKPVRLKRP…VEDILSSCKV (325 aa)) is autoinhibitory region. Phosphothreonine is present on residues threonine 415, threonine 450, threonine 452, threonine 482, and threonine 484. The interval 443–492 (FLHPAPWTPTPRRKQNEKKGILTTPNKNSHTKEKNQSKETPTKKPITTGE) is disordered. Residues 472–484 (HTKEKNQSKETPT) are compositionally biased toward basic and acidic residues. Residues serine 499, serine 506, and serine 518 each carry the phosphoserine modification. The region spanning 603 to 652 (SDFGKVTMQFELEVCQLSKSEMVGIRRQRLKGDAWVYKRLVEDILSSCKV) is the KA1 domain.

This sequence belongs to the protein kinase superfamily. CAMK Ser/Thr protein kinase family. SNF1 subfamily. In terms of processing, autophosphorylated: autophosphorylation of the T-loop at Thr-169 and Ser-173 is required for activation. Phosphorylated by the maturation promoting factor (MPF), composed of cdk1 and a cyclin-B. Also phosphorylated by some MAPK. Phosphorylated during oocyte maturation. Dephosphorylation destabilizes the protein. Degraded when cells exit mitosis.

It localises to the cell membrane. It carries out the reaction L-seryl-[protein] + ATP = O-phospho-L-seryl-[protein] + ADP + H(+). The enzyme catalyses L-threonyl-[protein] + ATP = O-phospho-L-threonyl-[protein] + ADP + H(+). With respect to regulation, activated by autophosphorylation of the T-loop at Thr-169 and Ser-173: in contrast to other members of the SNF1 subfamily, phosphorylation at Thr-169 is not mediated by STK11/LKB1 but via autophosphorylation instead. Its function is as follows. Serine/threonine-protein kinase involved in various processes such as cell cycle regulation, self-renewal of stem cells, apoptosis and splicing regulation. Also plays a role in primitive hematopoiesis, possibly by affecting the expression of genes critical for hematopoiesis. Plays a role in cytokinesis during early development. This is Maternal embryonic leucine zipper kinase (melk) from Xenopus tropicalis (Western clawed frog).